Here is a 505-residue protein sequence, read N- to C-terminus: L-arabinose isomerase (505 aa).

Mn(2+) is bound by residues E308, E335, H352, and H453.

The protein belongs to the arabinose isomerase family. It depends on Mn(2+) as a cofactor.

The catalysed reaction is beta-L-arabinopyranose = L-ribulose. It participates in carbohydrate degradation; L-arabinose degradation via L-ribulose; D-xylulose 5-phosphate from L-arabinose (bacterial route): step 1/3. Its function is as follows. Catalyzes the conversion of L-arabinose to L-ribulose. This Bifidobacterium longum (strain DJO10A) protein is L-arabinose isomerase.